We begin with the raw amino-acid sequence, 100 residues long: uncharacterized protein (100 aa).

It is found in the virion. This is an uncharacterized protein from Acanthamoeba polyphaga mimivirus (APMV).